The sequence spans 347 residues: Protein RecA (347 aa).

ATP is bound at residue 67–74; the sequence is GPESSGKT.

Belongs to the RecA family.

The protein resides in the cytoplasm. Its function is as follows. Can catalyze the hydrolysis of ATP in the presence of single-stranded DNA, the ATP-dependent uptake of single-stranded DNA by duplex DNA, and the ATP-dependent hybridization of homologous single-stranded DNAs. It interacts with LexA causing its activation and leading to its autocatalytic cleavage. This Helicobacter pylori (strain HPAG1) protein is Protein RecA.